The primary structure comprises 219 residues: N-(5'-phosphoribosyl)anthranilate isomerase (219 aa).

This sequence belongs to the TrpF family.

The catalysed reaction is N-(5-phospho-beta-D-ribosyl)anthranilate = 1-(2-carboxyphenylamino)-1-deoxy-D-ribulose 5-phosphate. It functions in the pathway amino-acid biosynthesis; L-tryptophan biosynthesis; L-tryptophan from chorismate: step 3/5. The chain is N-(5'-phosphoribosyl)anthranilate isomerase from Mesorhizobium japonicum (strain LMG 29417 / CECT 9101 / MAFF 303099) (Mesorhizobium loti (strain MAFF 303099)).